We begin with the raw amino-acid sequence, 505 residues long: Lysine--tRNA ligase (505 aa).

Mg(2+)-binding residues include Glu415 and Glu422.

This sequence belongs to the class-II aminoacyl-tRNA synthetase family. Homodimer. Requires Mg(2+) as cofactor.

The protein resides in the cytoplasm. It catalyses the reaction tRNA(Lys) + L-lysine + ATP = L-lysyl-tRNA(Lys) + AMP + diphosphate. This is Lysine--tRNA ligase from Shigella dysenteriae serotype 1 (strain Sd197).